The primary structure comprises 274 residues: Putative deoxyribonuclease TATDN1 homolog (274 aa).

The a divalent metal cation site is built by Glu-105, His-139, His-162, and Asp-208.

It belongs to the metallo-dependent hydrolases superfamily. TatD-type hydrolase family. The cofactor is a divalent metal cation.

Its subcellular location is the nucleus. Its function is as follows. Putative deoxyribonuclease. The polypeptide is Putative deoxyribonuclease TATDN1 homolog (Enterocytozoon bieneusi (strain H348) (Microsporidian parasite)).